Reading from the N-terminus, the 448-residue chain is Gametocyte surface protein P45/48 (448 aa).

An N-terminal signal peptide occupies residues 1–27; that stretch reads MMLYISAKKAQVAFILYIVLVLRIISG. The 138-residue stretch at 45–182 folds into the 6-Cys 1 domain; it reads IGYKCNFSNE…AMVHVRVLKY (138 aa). 2 disulfide bridges follow: Cys-49-Cys-71 and Cys-102-Cys-156. Residues Asn-50, Asn-131, Asn-190, Asn-204, Asn-254, Asn-299, and Asn-303 are each glycosylated (N-linked (GlcNAc...) asparagine). A 6-Cys 2 domain is found at 294–426; it reads VIHGCNFSSN…KSAYMTVTID (133 aa). 3 disulfide bridges follow: Cys-298-Cys-327, Cys-344-Cys-412, and Cys-352-Cys-410. Asp-426 carries GPI-anchor amidated aspartate lipidation. Residues 427-448 constitute a propeptide, removed in mature form; that stretch reads SAYYGFLAKTFIFLIVAILLYI.

As to quaternary structure, heterodimer; heterodimerizes with PF230.

The protein localises to the cell surface. It localises to the cell membrane. In terms of biological role, gametocyte surface protein required for male fertility. In Plasmodium falciparum (isolate 3D7), this protein is Gametocyte surface protein P45/48 (PF45/48).